The chain runs to 375 residues: Acetylornithine aminotransferase (375 aa).

Residues 93-94 (GT) and phenylalanine 120 each bind pyridoxal 5'-phosphate. A N(2)-acetyl-L-ornithine-binding site is contributed by arginine 123. Residue 205 to 208 (DEVQ) participates in pyridoxal 5'-phosphate binding. Lysine 234 bears the N6-(pyridoxal phosphate)lysine mark. Position 262 (threonine 262) interacts with N(2)-acetyl-L-ornithine. Residue threonine 263 coordinates pyridoxal 5'-phosphate.

This sequence belongs to the class-III pyridoxal-phosphate-dependent aminotransferase family. ArgD subfamily. As to quaternary structure, homodimer. Pyridoxal 5'-phosphate serves as cofactor.

The protein localises to the cytoplasm. The catalysed reaction is N(2)-acetyl-L-ornithine + 2-oxoglutarate = N-acetyl-L-glutamate 5-semialdehyde + L-glutamate. Its pathway is amino-acid biosynthesis; L-arginine biosynthesis; N(2)-acetyl-L-ornithine from L-glutamate: step 4/4. This is Acetylornithine aminotransferase from Staphylococcus epidermidis (strain ATCC 35984 / DSM 28319 / BCRC 17069 / CCUG 31568 / BM 3577 / RP62A).